Here is a 200-residue protein sequence, read N- to C-terminus: MNLKTVSGSAVELSEVAFGREFNEALVHQVVTAYLAGGRQGTRAHKSRADVSGGGKKPFRQKGTGRARAGSIRSPIWVGGGKTFAARPQDWSQKVNRKMYRGAMQCILAELVRQDRLVLVEEFAVAAPKTKELLAKLNDLNAARALIVTDAVDENLYLAARNLPHVDVVDATAIDPVSLIAFDKVVMSVAAAKKIEVELG.

The tract at residues Thr42–Gly65 is disordered.

It belongs to the universal ribosomal protein uL4 family. As to quaternary structure, part of the 50S ribosomal subunit.

Its function is as follows. One of the primary rRNA binding proteins, this protein initially binds near the 5'-end of the 23S rRNA. It is important during the early stages of 50S assembly. It makes multiple contacts with different domains of the 23S rRNA in the assembled 50S subunit and ribosome. In terms of biological role, forms part of the polypeptide exit tunnel. In Acinetobacter baumannii (strain AB307-0294), this protein is Large ribosomal subunit protein uL4.